A 621-amino-acid polypeptide reads, in one-letter code: MLPNSILKKIYICNQKEKIISRSFLLKLFKSQIGYPKSLAQLNSALSSIMRWYSHKGYQWALIQMHYIEGSSSIIVNIDEGLISTIRTEYYTSSLERSSKSSYTNMIEKHLSIRIGHPINIIYLKRKINYLKKNKLVGNIIYSVERSRNNSSHLDLKFQIQELQDKELVLFGENLYKTSYVIAFLSHLLQEPLYLANSWETYNIDQMSANRFKLHYYQPICNYQYINNKELADILIYLFSKSTFQHIKNSRFNPLLNCDGETTSRCKLYLRNLSNASSYFTVSMHSLENTINLKLRYLNPSLRISKKFTIQVVIQIIKKIASSCIFPSSIFLKNQKIFGQKFTNQYIFEGLMTYNITSCFSMSEKIFLSRNVQTKYFVKNLQTVKFISTTKALIGSNDHWLKKQSKLLYRQFLVLWLKLYYQNFDTLKWPTKGHLLEIESCYFTPFQESTFLNYHSQFHYNNLFFHKINIQHITHFSLPFYFQSRINYILRNVLKVQSNLKMETLPILLCRAYFEDKVCKPFFNFSIRIRTEYQVPINNKSRISFFCNYIRPFLKNSYQTCIIFQSSLINQKFISSLYQKLFYGLEIQLKLPINQIPPLSIEYTINSGRKFCIYLYISHQQ.

The protein localises to the plastid. It is found in the chloroplast. This is an uncharacterized protein from Porphyra purpurea (Red seaweed).